The chain runs to 273 residues: MTNTFSIGNNMNVGLGAPLLLIAGPCVIENEEKTLEIAERIKGIVRDMDVNFVFKASFDKANRTSIDSFRGPGLEQGLAILGKVKSRLGLPVISDVHSPDQVGPASEVLDILQIPAFLCRQTDLLTAAGNSGKPVNVKKGQFVGPWDMKHVTGKVLSTGNERIMLTERGSSFGYNNLVVDFRNFSIMRDLGFPVVFDATHSVQMPGGLGSCSGGDRSYVPLLARAAAAAGVDGVFFEVHTDPDKALCDGPNSLTMEMLESILPQLLAIRKAAS.

The protein belongs to the KdsA family.

Its subcellular location is the cytoplasm. It catalyses the reaction D-arabinose 5-phosphate + phosphoenolpyruvate + H2O = 3-deoxy-alpha-D-manno-2-octulosonate-8-phosphate + phosphate. It functions in the pathway carbohydrate biosynthesis; 3-deoxy-D-manno-octulosonate biosynthesis; 3-deoxy-D-manno-octulosonate from D-ribulose 5-phosphate: step 2/3. Its pathway is bacterial outer membrane biogenesis; lipopolysaccharide biosynthesis. This is 2-dehydro-3-deoxyphosphooctonate aldolase from Desulfatibacillum aliphaticivorans.